The primary structure comprises 188 residues: Inactive cysteine S-methyltransferase OspZ (188 aa).

The protein belongs to the NleE/OspZ family.

Its subcellular location is the secreted. It localises to the host cytoplasm. The protein localises to the host nucleus. Inactive effector protein: in contrast to other members of the family, does not have the ability to inhibit host cell NF-kappa-B activation. Probably lacks cysteine S-methyltransferase activity due to its inability to bind S-adenosyl-L-methionine at the C-terminus. In Shigella flexneri, this protein is Inactive cysteine S-methyltransferase OspZ.